Here is a 282-residue protein sequence, read N- to C-terminus: Epoxide hydrolase LasB (282 aa).

Residues 1-133 (MPAETVRKEV…TDSSWTARPA (133 aa)) form a lsd19A region. Substrate is bound at residue Tyr14. The active-site Proton acceptor; for 5-exo epoxide-opening cyclization activity is Asp38. Positions 65 and 146 each coordinate substrate. The lsd19B stretch occupies residues 134–282 (PDEERRKELA…TDVSLLDPAA (149 aa)). The active-site Proton acceptor; for 6-endo epoxide-opening cyclization activity is the Asp170. Substrate is bound by residues Arg177, Glu197, and Tyr251.

Its function is as follows. Epoxide hydrolase responsible for the double epoxide-opening cyclization of bisepoxyprelasalocid A to form lasalocid A, a polyether antibiotic. In vitro, accepts various substrate analogs differing in the left segment of lasalocid and epoxide stereochemistry to afford products with excellent regioselectivity. This Streptomyces lasalocidi (Streptomyces lasaliensis) protein is Epoxide hydrolase LasB (lsd19).